A 502-amino-acid chain; its full sequence is Glycerol kinase (502 aa).

An ADP-binding site is contributed by threonine 14. 3 residues coordinate ATP: threonine 14, threonine 15, and serine 16. Threonine 14 serves as a coordination point for sn-glycerol 3-phosphate. Arginine 18 contributes to the ADP binding site. Residues arginine 84, glutamate 85, tyrosine 136, and aspartate 246 each coordinate sn-glycerol 3-phosphate. 5 residues coordinate glycerol: arginine 84, glutamate 85, tyrosine 136, aspartate 246, and glutamine 247. ADP contacts are provided by threonine 268 and glycine 311. Positions 268, 311, 315, and 412 each coordinate ATP. Residues glycine 412 and asparagine 416 each coordinate ADP.

It belongs to the FGGY kinase family.

The enzyme catalyses glycerol + ATP = sn-glycerol 3-phosphate + ADP + H(+). Its pathway is polyol metabolism; glycerol degradation via glycerol kinase pathway; sn-glycerol 3-phosphate from glycerol: step 1/1. Inhibited by fructose 1,6-bisphosphate (FBP). Functionally, key enzyme in the regulation of glycerol uptake and metabolism. Catalyzes the phosphorylation of glycerol to yield sn-glycerol 3-phosphate. The polypeptide is Glycerol kinase (Pasteurella multocida (strain Pm70)).